Here is a 349-residue protein sequence, read N- to C-terminus: S-adenosylmethionine decarboxylase proenzyme 3 (349 aa).

Active-site residues include glutamate 9 and glutamate 12. A substrate-binding site is contributed by glutamate 68. Serine 69 (schiff-base intermediate with substrate; via pyruvic acid) is an active-site residue. Residue serine 69 is modified to Pyruvic acid (Ser); by autocatalysis. Cysteine 83 (proton donor; for catalytic activity) is an active-site residue. Active-site proton acceptor; for processing activity residues include serine 235 and histidine 248. Glutamate 252 is a substrate binding site.

This sequence belongs to the eukaryotic AdoMetDC family. The cofactor is pyruvate. Is synthesized initially as an inactive proenzyme. Formation of the active enzyme involves a self-maturation process in which the active site pyruvoyl group is generated from an internal serine residue via an autocatalytic post-translational modification. Two non-identical subunits are generated from the proenzyme in this reaction, and the pyruvate is formed at the N-terminus of the alpha chain, which is derived from the carboxyl end of the proenzyme. The post-translation cleavage follows an unusual pathway, termed non-hydrolytic serinolysis, in which the side chain hydroxyl group of the serine supplies its oxygen atom to form the C-terminus of the beta chain, while the remainder of the serine residue undergoes an oxidative deamination to produce ammonia and the pyruvoyl group blocking the N-terminus of the alpha chain.

It catalyses the reaction S-adenosyl-L-methionine + H(+) = S-adenosyl 3-(methylsulfanyl)propylamine + CO2. The protein operates within amine and polyamine biosynthesis; S-adenosylmethioninamine biosynthesis; S-adenosylmethioninamine from S-adenosyl-L-methionine: step 1/1. Functionally, essential for biosynthesis of the polyamines spermidine and spermine. Essential for polyamine homeostasis, and normal plant embryogenesis, growth and development. The chain is S-adenosylmethionine decarboxylase proenzyme 3 from Arabidopsis thaliana (Mouse-ear cress).